We begin with the raw amino-acid sequence, 206 residues long: Imidazoleglycerol-phosphate dehydratase (206 aa).

The protein belongs to the imidazoleglycerol-phosphate dehydratase family.

The protein localises to the cytoplasm. The enzyme catalyses D-erythro-1-(imidazol-4-yl)glycerol 3-phosphate = 3-(imidazol-4-yl)-2-oxopropyl phosphate + H2O. The protein operates within amino-acid biosynthesis; L-histidine biosynthesis; L-histidine from 5-phospho-alpha-D-ribose 1-diphosphate: step 6/9. In Leptospira borgpetersenii serovar Hardjo-bovis (strain JB197), this protein is Imidazoleglycerol-phosphate dehydratase.